We begin with the raw amino-acid sequence, 28 residues long: Conotoxin Cl6a (28 aa).

Disulfide bonds link Cys-3-Cys-13, Cys-7-Cys-19, and Cys-12-Cys-24.

Expressed by the venom duct.

The protein resides in the secreted. This is Conotoxin Cl6a from Californiconus californicus (California cone).